A 576-amino-acid chain; its full sequence is MSLSPSRIRLLDSVTVNQISAGEVIENAASVVKELIENSLDAGADEIHIETLGGGRGQIVVRDNGVGMDPEEVPVALQRHATSKIAHFADIFSLASYGFRGEALPSIASISKMEIHTARAGGLGSKTLIEKGEPVCCEPAPRQQGTTIAVHSLFYNVPMRQSFQKSPQMDRLAIRRLLENSVLSSEGIGWTWISECRQELYVAKKQGFIERVALVLGESFVQEAFFIDKQQGDLRVLGFLGSPNQHRSTRQGQRLFINNRAVESSFISKKVAEAYAWMIPAQRYPIFVLKLFLPPMWCDFNVHPQKTEVRLLQEGQISNLLVEAISEALLRRSPSLEETVLKVPTEKIPIENEGISVPSIRPAIVSAPLSCPTFSQQPYLKTEMATIVSRDSASSSLSVVEKVRFLTSLGKVLLVEDSEGVHVVFVQAARKHLFYVSLLSERLESRLACQTFLLPSSVQMTKLEADFLQMRLEALTALGIELSRISPDSFAIESAPPFIQEEELKEWIVALAQEGALHVGESFEQLVENTVQKLVFSRNARAFDYAWLDILWKLGKPEKAFDGEMIRRLVLDDDFM.

This sequence belongs to the DNA mismatch repair MutL/HexB family.

Functionally, this protein is involved in the repair of mismatches in DNA. It is required for dam-dependent methyl-directed DNA mismatch repair. May act as a 'molecular matchmaker', a protein that promotes the formation of a stable complex between two or more DNA-binding proteins in an ATP-dependent manner without itself being part of a final effector complex. This Chlamydia trachomatis serovar A (strain ATCC VR-571B / DSM 19440 / HAR-13) protein is DNA mismatch repair protein MutL.